The following is a 519-amino-acid chain: NADH-quinone oxidoreductase subunit N (519 aa).

Transmembrane regions (helical) follow at residues 14–34 (LLPA…EVFL), 44–64 (AVLT…TMFE), 82–102 (FLTF…VSFL), 117–137 (LFAS…TLFV), 167–187 (FILG…LYGA), 209–229 (GLVY…VAAV), 249–269 (LMSV…FFMV), 278–298 (LLGL…LLAI), 307–327 (LAYS…ALFV), 359–379 (ILYY…IVSV), 407–427 (WAFA…TIGF), 431–451 (LLIF…VGVL), and 487–507 (LALV…GPIM).

This sequence belongs to the complex I subunit 2 family. NDH-1 is composed of 14 different subunits. Subunits NuoA, H, J, K, L, M, N constitute the membrane sector of the complex.

Its subcellular location is the cell inner membrane. The catalysed reaction is a quinone + NADH + 5 H(+)(in) = a quinol + NAD(+) + 4 H(+)(out). Functionally, NDH-1 shuttles electrons from NADH, via FMN and iron-sulfur (Fe-S) centers, to quinones in the respiratory chain. The immediate electron acceptor for the enzyme in this species is believed to be ubiquinone. Couples the redox reaction to proton translocation (for every two electrons transferred, four hydrogen ions are translocated across the cytoplasmic membrane), and thus conserves the redox energy in a proton gradient. In Myxococcus xanthus (strain DK1622), this protein is NADH-quinone oxidoreductase subunit N.